Consider the following 854-residue polypeptide: ATP-dependent zinc metalloprotease FtsH (854 aa).

Residues 1 to 5 (MNRKT) lie on the Cytoplasmic side of the membrane. The helical transmembrane segment at 6–26 (VFRNVLLVAVVLLVIYAFSYF) threads the bilayer. At 27-112 (SNDTRDFKTV…FNTTVTQESW (86 aa)) the chain is on the extracellular side. A helical transmembrane segment spans residues 113 to 133 (LTSILLFVLPMIILFGIFFFV). At 134-854 (MNRMQGGGGR…ARWDGPDGSR (721 aa)) the chain is on the cytoplasmic side. 207 to 214 (GPPGTGKT) provides a ligand contact to ATP. A Zn(2+)-binding site is contributed by histidine 429. Residue glutamate 430 is part of the active site. The Zn(2+) site is built by histidine 433 and aspartate 505. A disordered region spans residues 658-854 (AGAPNSGVPN…ARWDGPDGSR (197 aa)). Composition is skewed to low complexity over residues 661–692 (PNSG…AQPS) and 698–719 (APQQ…WSAP). Pro residues predominate over residues 720 to 730 (GWPPRENPSPT). Over residues 749 to 778 (NQSQGQYGQPQHGQPQPDQGQYGQPHPGQQ) the composition is skewed to low complexity. Residues 812–822 (GNPSGENQWQS) are compositionally biased toward polar residues. Residues 825–834 (PEQPQTPPPH) show a composition bias toward pro residues.

In the central section; belongs to the AAA ATPase family. The protein in the C-terminal section; belongs to the peptidase M41 family. In terms of assembly, homohexamer. Zn(2+) serves as cofactor.

Its subcellular location is the cell membrane. In terms of biological role, acts as a processive, ATP-dependent zinc metallopeptidase for both cytoplasmic and membrane proteins. Plays a role in the quality control of integral membrane proteins. In Rhodococcus erythropolis (strain PR4 / NBRC 100887), this protein is ATP-dependent zinc metalloprotease FtsH.